Consider the following 557-residue polypeptide: ETHYLENE INSENSITIVE 3-like 5 protein (557 aa).

Disordered stretches follow at residues 1–23 and 61–96; these read MVEVQDLEPLSPIQDYDEDDLEE and NLNSVISSPSSSTSASSSSSSSVIVRRTEASRRKKM. A compositionally biased stretch (low complexity) spans 64 to 82; the sequence is SVISSPSSSTSASSSSSSS. Positions 270-311 form a coiled coil; the sequence is ERVRRLARQSKCLQDKMMAKETDTWSRVLNQEEARLNRLKIS.

The protein belongs to the EIN3 family.

It is found in the nucleus. Its function is as follows. Putative transcription factor that may be involved in the ethylene response pathway. The sequence is that of ETHYLENE INSENSITIVE 3-like 5 protein (EIL5) from Arabidopsis thaliana (Mouse-ear cress).